The chain runs to 898 residues: Chloride channel protein 2 (898 aa).

Residues 1-90 (MAAPAAAAVE…RCHKFLVSRV (90 aa)) are Cytoplasmic-facing. Residues 19–37 (QYEQTLMYGRYTQDLGAFA) are essential for channel gating by both voltage and cell volume. Phosphothreonine is present on Thr-23. A modulates channel gating by both voltage and cell volume region spans residues 39–52 (EEAARIRLGGPEPW). Transmembrane regions (helical) follow at residues 91–124 (GEDWIFLVLLGLLMALVSWAMDYAIAACLQAQQW) and 133–158 (LLLQYLAWVTYPVVLITFSAGFTQIL). Residues 164 to 168 (GSGIP) carry the Selectivity filter part_1 motif. Residues 167 to 174 (IPEMKTIL) constitute an intramembrane region (helical). The next 2 membrane-spanning stretches (helical) occupy residues 183 to 201 (LTLKTFVAKVIGLTCALGS) and 208 to 226 (EGPFVHIASMCAALLSKFL). Positions 206 to 210 (GKEGP) match the Selectivity filter part_2 motif. 2 consecutive intramembrane regions (helical) follow at residues 242-254 (MLAAACAVGVGCC) and 258-266 (PIGGVLFSI). 5 helical membrane passes run 278–298 (YWRGFFAATFSAFIFRVLAVW), 324–352 (LPAFAVIGIASGFGGALFVYLNRKIVQVM), 361–380 (FLMRKRLLFPALVTLLISTL), 432–452 (ANVFLTLVIFILMKFWMSALA), and 460–483 (GAFMPVFVIGAAFGRLVGESMAAW). A Selectivity filter part_3 motif is present at residues 460–464 (GAFMP). The segment at residues 500–514 (GGYAVVGAAALAGAV) is an intramembrane region (helical). An intramembrane region (note=Loop between two helices) is located at residues 515–516 (TH). Positions 517-528 (TVSTAVIVFELT) form an intramembrane region, helical. The segment at residues 529 to 533 (GQIAH) is an intramembrane region (note=Loop between two helices). Residues 534–551 (ILPVMIAVILANAVAQSL) form a helical membrane-spanning segment. The Cytoplasmic portion of the chain corresponds to 552-898 (QPSLYDSIIR…SPSDSDDKCQ (347 aa)). The CBS 1 domain maps to 587-645 (MVRDVPHVALSCTFRDLRLALHRTKGRTLALVESPESMILLGSIERTQVVALLAAQLSP). A compositionally biased stretch (basic residues) spans 647 to 658 (RRRQSKQKRRVA). The disordered stretch occupies residues 647–675 (RRRQSKQKRRVAHTSPPSCQESPPSPETS). The residue at position 710 (Ser-710) is a Phosphoserine. The disordered stretch occupies residues 726–766 (FCGSPPPEAASESEKSESSEKRKSKRVRISLASDSDLEGEM). A compositionally biased stretch (basic and acidic residues) spans 737 to 746 (ESEKSESSEK). Ser-758 bears the Phosphoserine mark. The CBS 2 domain occupies 790-850 (IDPAPFQLVE…GSVTAQGVKV (61 aa)). The short motif at 812-813 (LL) is the Basolateral membrane sorting element. The interval 856-898 (SFRDSATSSSDTETTEVHALWGPRSRHGLPREGSPSDSDDKCQ) is disordered.

This sequence belongs to the chloride channel (TC 2.A.49) family. ClC-2/CLCN2 subfamily. Homodimer. Interacts with auxiliary subunit HEPACAM. Phosphorylated. Activated by dephosphorylation. As to expression, ubiquitously expressed.

It is found in the cell membrane. Its subcellular location is the basolateral cell membrane. The protein localises to the cell projection. It localises to the dendritic spine membrane. The protein resides in the axon. The enzyme catalyses chloride(in) = chloride(out). It catalyses the reaction thiocyanate(in) = thiocyanate(out). The catalysed reaction is bromide(in) = bromide(out). It carries out the reaction nitrate(in) = nitrate(out). The enzyme catalyses iodide(out) = iodide(in). With respect to regulation, common gate kinetics are down-regulated by intracellular ATP. Inhibited by AK-42, a derivative of meclofenamate. Inhibited by Cd(2+). Inhibited by Zn(2+) and PKC activation. Inhibited at acidic pH. CCLN2:HEPACAM channel conductance is up-regulated upon hypo-osmolarity. Functionally, voltage-gated and osmosensitive chloride channel. Forms a homodimeric channel where each subunit has its own ion conduction pathway. Conducts double-barreled currents controlled by two types of gates, two fast glutamate gates that control each subunit independently and a slow common gate that opens and shuts off both subunits simultaneously. Displays inward rectification currents activated upon membrane hyperpolarization and extracellular hypotonicity. Contributes to chloride conductance involved in neuron excitability. In hippocampal neurons, generates a significant part of resting membrane conductance and provides an additional chloride efflux pathway to prevent chloride accumulation in dendrites upon GABA receptor activation. In glia, associates with the auxiliary subunit HEPACAM/GlialCAM at astrocytic processes and myelinated fiber tracts where it may regulate transcellular chloride flux buffering extracellular chloride and potassium concentrations. Regulates aldosterone production in adrenal glands. The opening of CLCN2 channels at hyperpolarized membrane potentials in the glomerulosa causes cell membrane depolarization, activation of voltage-gated calcium channels and increased expression of aldosterone synthase, the rate-limiting enzyme for aldosterone biosynthesis. Contributes to chloride conductance in retinal pigment epithelium involved in phagocytosis of shed photoreceptor outer segments and photoreceptor renewal. Conducts chloride currents at the basolateral membrane of epithelial cells with a role in chloride reabsorption rather than secretion. Permeable to small monovalent anions with chloride &gt; thiocyanate &gt; bromide &gt; nitrate &gt; iodide ion selectivity. This is Chloride channel protein 2 (CLCN2) from Oryctolagus cuniculus (Rabbit).